Reading from the N-terminus, the 330-residue chain is Lactamase-like protein nscB (330 aa).

Zn(2+) is bound by residues His97, His99, Asp101, and His102. Asp101 serves as the catalytic Proton donor/acceptor.

It belongs to the metallo-beta-lactamase superfamily. The cofactor is Zn(2+).

The protein operates within secondary metabolite biosynthesis. Functionally, lactamase-like protein; part of the gene cluster that mediates the biosynthesis of neosartoricin, a prenylated anthracenone that exhibits T-cell antiproliferative activity, suggestive of a physiological role as an immunosuppressive agent. The non-reducing polyketide synthase nscA probably synthesizes and cyclizes the decaketide backbone. The hydrolase nscB then mediates the product release through hydrolysis followed by spontaneous decarboxylation. The prenyltransferase nscD catalyzes the addition of the dimethylallyl group to the aromatic C5. The FAD-dependent monooxygenase nscC is then responsible for the stereospecific hydroxylation at C2. There is no gene encoding O-acetyltransferase in the nsc gene cluster; thus, the last step of 2-O-acetylation leading to neosartoricin may be catalyzed by an unidentified O-acetyltransferase. This chain is Lactamase-like protein nscB, found in Aspergillus fumigatus (strain ATCC MYA-4609 / CBS 101355 / FGSC A1100 / Af293) (Neosartorya fumigata).